The chain runs to 123 residues: Small ribosomal subunit protein uS13 (123 aa).

The tract at residues 99-123 (RGQRTRTNARTRKGPRRTVGVKRKK) is disordered.

It belongs to the universal ribosomal protein uS13 family. Part of the 30S ribosomal subunit. Forms a loose heterodimer with protein S19. Forms two bridges to the 50S subunit in the 70S ribosome.

In terms of biological role, located at the top of the head of the 30S subunit, it contacts several helices of the 16S rRNA. In the 70S ribosome it contacts the 23S rRNA (bridge B1a) and protein L5 of the 50S subunit (bridge B1b), connecting the 2 subunits; these bridges are implicated in subunit movement. Contacts the tRNAs in the A and P-sites. The chain is Small ribosomal subunit protein uS13 from Carboxydothermus hydrogenoformans (strain ATCC BAA-161 / DSM 6008 / Z-2901).